The chain runs to 1032 residues: Toll-like receptor 9 (1032 aa).

An N-terminal signal peptide occupies residues 1 to 25 (MGFCRSALHPLSLLVQAIMLAMTLA). Residues 26-818 (LGTLPAFLPC…CLDEALSWDC (793 aa)) are Extracellular-facing. Cysteine 35 and cysteine 45 are joined by a disulfide. DNA is bound at residue 47–51 (WLFLK). LRR repeat units follow at residues 62-85 (RGNVTSLSLSSNRIHHLHDSDFAH), 87-110 (PSLRHLNLKWNCPPVGLSPMHFPC), 122-147 (VPTLEELNLSYNNIMTVPALPKSLIS), 150-166 (LSHTNILMLDSASLAGL), 167-190 (HALRFLFMDGNCYYKNPCRQALEV), 198-221 (LGNLTHLSLKYNNLTVVPRNLPSS), 223-242 (EYLLLSYNRIVKLAPEDLAN), 243-268 (LTALRVLDVGGNCRRCDHAPNPCMEC), 283-306 (LSRLEGLVLKDSSLSWLNASWFRG), 308-332 (GNLRVLDLSENFLYKCITKTKAFQG), 333-356 (LTQLRKLNLSFNYQKRVSFAHLSL), 363-386 (LVALKELDMHGIFFRSLDETTLRP), 390-413 (LPMLQTLRLQMNFINQAQLGIFRA), and 415-440 (PGLRYVDLSDNRISGASELTATMGEA). Asparagine 64 is a glycosylation site (N-linked (GlcNAc...) asparagine). DNA-binding positions include 72–77 (SNRIHH) and 95–109 (KWNCPPVGLSPMHFP). Cysteine 98 and cysteine 110 are disulfide-bonded. Asparagine 129 carries N-linked (GlcNAc...) asparagine glycosylation. Position 132 (tyrosine 132) interacts with DNA. An intrachain disulfide couples cysteine 178 to cysteine 184. 179–181 (YYK) contacts DNA. N-linked (GlcNAc...) asparagine glycosylation occurs at asparagine 200. Residue tyrosine 208 coordinates DNA. 2 N-linked (GlcNAc...) asparagine glycosylation sites follow: asparagine 210 and asparagine 242. Cystine bridges form between cysteine 255–cysteine 268 and cysteine 258–cysteine 265. S-palmitoyl cysteine attachment occurs at residues cysteine 258 and cysteine 265. Residue asparagine 300 is glycosylated (N-linked (GlcNAc...) asparagine). An N-linked (GlcNAc...) asparagine glycan is attached at asparagine 340. Asparagine 469, asparagine 474, and asparagine 513 each carry an N-linked (GlcNAc...) asparagine glycan. LRR repeat units follow at residues 470-494 (CSTLNFTLDLSRNNLVTVQPEMFAQ), 496-519 (SHLQCLRLSHNCISQAVNGSQFLP), 520-543 (LTGLQVLDLSHNKLDLYHEHSFTE), 545-572 (PRLEALDLSYNSQPFGMQGVGHNFSFVA), 574-598 (LRTLRHLSLAHNNIHSQVSQQLCST), 600-622 (LRALDFSGNALGHMWAEGDLYLH), 627-650 (LSGLIWLDLSQNRLHTLLPQTLRN), 652-675 (PKSLQVLRLRDNYLAFFKWWSLHF), 676-699 (LPKLEVLDLAGNQLKALTNGSLPA), 701-723 (TRLRRLDVSCNSISFVAPGFFSK), 724-747 (AKELRELNLSANALKTVDHSWFGP), and 749-772 (ASALQILDVSANPLHCACGAAFMD). An intrachain disulfide couples cysteine 470 to cysteine 500. Asparagine 567 is a glycosylation site (N-linked (GlcNAc...) asparagine). The N-linked (GlcNAc...) asparagine glycan is linked to asparagine 694. A glycan (N-linked (GlcNAc...) asparagine) is linked at asparagine 731. Intrachain disulfides connect cysteine 764-cysteine 790 and cysteine 766-cysteine 809. The chain crosses the membrane as a helical span at residues 819 to 839 (FALSLLAVALGLGVPMLHHLC). Residues 840–1032 (GWDLWYCFHL…RNFCQGPTAE (193 aa)) lie on the Cytoplasmic side of the membrane. Positions 868–1013 (LPYDAFVVFD…SFWAQLGMAL (146 aa)) constitute a TIR domain.

This sequence belongs to the Toll-like receptor family. In terms of assembly, monomer and homodimer. Exists as a monomer in the absence of unmethylated cytidine-phosphate-guanosine (CpG) ligand. Proteolytic processing of an insertion loop (Z-loop) is required for homodimerization upon binding to the unmethylated CpG ligand leading to its activation. Interacts with MYD88 via their respective TIR domains. Interacts with BTK. Interacts (via transmembrane domain) with UNC93B1. Interacts with CD300LH; the interaction may promote full activation of TLR9-triggered innate responses. Interacts with CNPY3 and HSP90B1; this interaction is required for proper folding in the endoplasmic reticulum. Interacts with SMPDL3B. Interacts with CD82; this interaction is essential for TLR9-dependent myddosome formation in response to CpG stimulation. Post-translationally, activated by proteolytic cleavage of the flexible loop between repeats LRR14 and LRR15 within the ectodomain. Cleavage requires UNC93B1. Proteolytically processed by first removing the majority of the ectodomain by either asparagine endopeptidase (AEP) or a cathepsin followed by a trimming event that is solely cathepsin mediated and required for optimal receptor signaling. In terms of processing, palmitoylated by ZDHHC3 in the Golgi regulates TLR9 trafficking from the Golgi to endosomes. Depalmitoylation by PPT1 controls the release of TLR9 from UNC93B1 in endosomes. In terms of tissue distribution, highly expressed in spleen, lymph node, tonsil and peripheral blood leukocytes, especially in plasmacytoid pre-dendritic cells. Levels are much lower in monocytes and CD11c+ immature dendritic cells. Also detected in lung and liver.

It localises to the endoplasmic reticulum membrane. The protein resides in the early endosome membrane. Its subcellular location is the lysosome. It is found in the cytoplasmic vesicle. The protein localises to the phagosome. It localises to the golgi apparatus membrane. Key component of innate and adaptive immunity. TLRs (Toll-like receptors) control host immune response against pathogens through recognition of molecular patterns specific to microorganisms. TLR9 is a nucleotide-sensing TLR which is activated by unmethylated cytidine-phosphate-guanosine (CpG) dinucleotides. Acts via MYD88 and TRAF6, leading to NF-kappa-B activation, cytokine secretion and the inflammatory response. Controls lymphocyte response to Helicobacter infection. Upon CpG stimulation, induces B-cell proliferation, activation, survival and antibody production. The sequence is that of Toll-like receptor 9 (TLR9) from Homo sapiens (Human).